The sequence spans 299 residues: UDP-N-acetylenolpyruvoylglucosamine reductase (299 aa).

An FAD-binding PCMH-type domain is found at 21 to 189 (RVGGPAQWLL…LSARFRLEPG (169 aa)). Residue arginine 168 is part of the active site. The Proton donor role is filled by serine 219. Glutamate 289 is a catalytic residue.

Belongs to the MurB family. FAD is required as a cofactor.

It is found in the cytoplasm. It carries out the reaction UDP-N-acetyl-alpha-D-muramate + NADP(+) = UDP-N-acetyl-3-O-(1-carboxyvinyl)-alpha-D-glucosamine + NADPH + H(+). It functions in the pathway cell wall biogenesis; peptidoglycan biosynthesis. Cell wall formation. The polypeptide is UDP-N-acetylenolpyruvoylglucosamine reductase (Parasynechococcus marenigrum (strain WH8102)).